Here is a 308-residue protein sequence, read N- to C-terminus: GTPase Era (308 aa).

Positions 7–181 constitute an Era-type G domain; the sequence is RCGWVALIGP…LRLIVGYMPE (175 aa). Residues 15 to 22 form a G1 region; the sequence is GPPNAGKS. 15 to 22 is a binding site for GTP; the sequence is GPPNAGKS. Residues 41 to 45 form a G2 region; the sequence is QTTRN. The interval 62 to 65 is G3; that stretch reads DTPG. Residues 62–66 and 130–133 contribute to the GTP site; these read DTPGI and NKID. The tract at residues 130–133 is G4; that stretch reads NKID. Positions 160–162 are G5; it reads ASA. In terms of domain architecture, KH type-2 spans 212–290; that stretch reads LRQELPYSTA…HLELWVKVRE (79 aa).

This sequence belongs to the TRAFAC class TrmE-Era-EngA-EngB-Septin-like GTPase superfamily. Era GTPase family. As to quaternary structure, monomer.

The protein localises to the cytoplasm. The protein resides in the cell inner membrane. Its function is as follows. An essential GTPase that binds both GDP and GTP, with rapid nucleotide exchange. Plays a role in 16S rRNA processing and 30S ribosomal subunit biogenesis and possibly also in cell cycle regulation and energy metabolism. This chain is GTPase Era, found in Nitratidesulfovibrio vulgaris (strain DP4) (Desulfovibrio vulgaris).